The primary structure comprises 340 residues: Ketol-acid reductoisomerase (NADP(+)) (340 aa).

In terms of domain architecture, KARI N-terminal Rossmann spans 5–182; sequence MEYEKDVKVA…GSARVGLLET (178 aa). NADP(+) is bound by residues 26 to 29, Arg-49, Ser-53, and 83 to 86; these read YGSQ and DEIQ. His-108 is an active-site residue. Gly-134 is an NADP(+) binding site. In terms of domain architecture, KARI C-terminal knotted spans 183 to 328; the sequence is TYKEETEEDL…AELRKAMPFV (146 aa). Mg(2+) contacts are provided by Asp-191, Glu-195, Glu-227, and Glu-231. Residue Ser-252 participates in substrate binding.

This sequence belongs to the ketol-acid reductoisomerase family. Requires Mg(2+) as cofactor.

The catalysed reaction is (2R)-2,3-dihydroxy-3-methylbutanoate + NADP(+) = (2S)-2-acetolactate + NADPH + H(+). It catalyses the reaction (2R,3R)-2,3-dihydroxy-3-methylpentanoate + NADP(+) = (S)-2-ethyl-2-hydroxy-3-oxobutanoate + NADPH + H(+). It functions in the pathway amino-acid biosynthesis; L-isoleucine biosynthesis; L-isoleucine from 2-oxobutanoate: step 2/4. Its pathway is amino-acid biosynthesis; L-valine biosynthesis; L-valine from pyruvate: step 2/4. Functionally, involved in the biosynthesis of branched-chain amino acids (BCAA). Catalyzes an alkyl-migration followed by a ketol-acid reduction of (S)-2-acetolactate (S2AL) to yield (R)-2,3-dihydroxy-isovalerate. In the isomerase reaction, S2AL is rearranged via a Mg-dependent methyl migration to produce 3-hydroxy-3-methyl-2-ketobutyrate (HMKB). In the reductase reaction, this 2-ketoacid undergoes a metal-dependent reduction by NADPH to yield (R)-2,3-dihydroxy-isovalerate. The chain is Ketol-acid reductoisomerase (NADP(+)) from Streptococcus sanguinis (strain SK36).